A 258-amino-acid polypeptide reads, in one-letter code: Acyl-[acyl-carrier-protein]--UDP-N-acetylglucosamine O-acyltransferase (258 aa).

It belongs to the transferase hexapeptide repeat family. LpxA subfamily. Homotrimer.

The protein localises to the cytoplasm. The catalysed reaction is a (3R)-hydroxyacyl-[ACP] + UDP-N-acetyl-alpha-D-glucosamine = a UDP-3-O-[(3R)-3-hydroxyacyl]-N-acetyl-alpha-D-glucosamine + holo-[ACP]. It participates in glycolipid biosynthesis; lipid IV(A) biosynthesis; lipid IV(A) from (3R)-3-hydroxytetradecanoyl-[acyl-carrier-protein] and UDP-N-acetyl-alpha-D-glucosamine: step 1/6. Involved in the biosynthesis of lipid A, a phosphorylated glycolipid that anchors the lipopolysaccharide to the outer membrane of the cell. In Pseudomonas syringae pv. syringae (strain B728a), this protein is Acyl-[acyl-carrier-protein]--UDP-N-acetylglucosamine O-acyltransferase.